The primary structure comprises 348 residues: Protein RecA (348 aa).

ATP is bound at residue 65-72 (GPESSGKT).

This sequence belongs to the RecA family.

Its subcellular location is the cytoplasm. In terms of biological role, can catalyze the hydrolysis of ATP in the presence of single-stranded DNA, the ATP-dependent uptake of single-stranded DNA by duplex DNA, and the ATP-dependent hybridization of homologous single-stranded DNAs. It interacts with LexA causing its activation and leading to its autocatalytic cleavage. In Vibrio natriegens, this protein is Protein RecA.